A 939-amino-acid chain; its full sequence is Vacuolar membrane protease (939 aa).

At 1–11 (MGFNSIFKFRK) the chain is on the cytoplasmic side. A helical membrane pass occupies residues 12–32 (TSLSLLLFAVYFIIGILYFID). Residues 33-356 (KTRYKHSLPI…TFVAIPSTKL (324 aa)) are Vacuolar-facing. N-linked (GlcNAc...) asparagine glycosylation is found at asparagine 59, asparagine 88, and asparagine 114. Zn(2+) is bound by residues histidine 149 and aspartate 161. Glutamate 193 serves as the catalytic Proton acceptor. The Zn(2+) site is built by glutamate 194, glutamate 219, and histidine 293. Asparagine 326 carries N-linked (GlcNAc...) asparagine glycosylation. A helical transmembrane segment spans residues 357-377 (FWINIALLIIMPIISIFLFSI). Over 378–388 (VKKYNNEIIDS) the chain is Cytoplasmic. Residues 389-409 (GNIWWRLPISAMSSGTIIIFT) traverse the membrane as a helical segment. The Vacuolar portion of the chain corresponds to 410 to 424 (TKLIMKWNPYILSRN). A helical membrane pass occupies residues 425–445 (FLLPLIGLTFEFIILNSYILT). The Cytoplasmic segment spans residues 446 to 453 (MFENLSSS). The helical transmembrane segment at 454–474 (FDFKTIAINEISFLFWIVLAY) threads the bilayer. The Vacuolar segment spans residues 475–491 (QTWKLYDNNYQNTGIYP). Residues 492-512 (FTICYIVMATAGNIGYLFLIF) form a helical membrane-spanning segment. Topologically, residues 513-588 (KNIEIVEDEE…NQRTILKESK (76 aa)) are cytoplasmic. A compositionally biased stretch (basic and acidic residues) spans 540 to 552 (YRDEINGRDDSSR). The segment at 540 to 561 (YRDEINGRDDSSRDSNSASIPT) is disordered. A helical membrane pass occupies residues 589–609 (LVYNYDWIIEFLLVVPFSTFL). Over 610–636 (LYNSLELIMDAVNQTIQETGDLYKVYK) the chain is Vacuolar. N-linked (GlcNAc...) asparagine glycosylation occurs at asparagine 622. The chain crosses the membrane as a helical span at residues 637-657 (ILAIGSILISIPTLPFAYKIG). Residues 658–663 (CQLGKT) are Cytoplasmic-facing. A helical membrane pass occupies residues 664 to 684 (LTFISIGCLLISMALAPFTEM). Residues 685-939 (NPIKFRFMQV…LVKLTEAMVL (255 aa)) lie on the Vacuolar side of the membrane. 2 N-linked (GlcNAc...) asparagine glycosylation sites follow: asparagine 810 and asparagine 820.

This sequence belongs to the peptidase M28 family. Requires Zn(2+) as cofactor.

Its subcellular location is the vacuole membrane. May be involved in vacuolar sorting and osmoregulation. The sequence is that of Vacuolar membrane protease from Vanderwaltozyma polyspora (strain ATCC 22028 / DSM 70294 / BCRC 21397 / CBS 2163 / NBRC 10782 / NRRL Y-8283 / UCD 57-17) (Kluyveromyces polysporus).